A 260-amino-acid polypeptide reads, in one-letter code: UPF0246 protein Tola_0968 (260 aa).

It belongs to the UPF0246 family.

This chain is UPF0246 protein Tola_0968, found in Tolumonas auensis (strain DSM 9187 / NBRC 110442 / TA 4).